Here is an 84-residue protein sequence, read N- to C-terminus: Exodeoxyribonuclease 7 small subunit (84 aa).

This sequence belongs to the XseB family. In terms of assembly, heterooligomer composed of large and small subunits.

The protein resides in the cytoplasm. It catalyses the reaction Exonucleolytic cleavage in either 5'- to 3'- or 3'- to 5'-direction to yield nucleoside 5'-phosphates.. Functionally, bidirectionally degrades single-stranded DNA into large acid-insoluble oligonucleotides, which are then degraded further into small acid-soluble oligonucleotides. The chain is Exodeoxyribonuclease 7 small subunit from Azoarcus sp. (strain BH72).